The sequence spans 565 residues: Oxygen-dependent choline dehydrogenase (565 aa).

6 to 35 (DYIIIGAGSAGNVLATRLTEDADVSVLLLE) serves as a coordination point for FAD. The active-site Proton acceptor is the His475. Residues 541 to 565 (RSNAPYFVAGERPVRGQPQRAVSAA) are disordered.

Belongs to the GMC oxidoreductase family. FAD serves as cofactor.

The enzyme catalyses choline + A = betaine aldehyde + AH2. The catalysed reaction is betaine aldehyde + NAD(+) + H2O = glycine betaine + NADH + 2 H(+). Its pathway is amine and polyamine biosynthesis; betaine biosynthesis via choline pathway; betaine aldehyde from choline (cytochrome c reductase route): step 1/1. Its function is as follows. Involved in the biosynthesis of the osmoprotectant glycine betaine. Catalyzes the oxidation of choline to betaine aldehyde and betaine aldehyde to glycine betaine at the same rate. The protein is Oxygen-dependent choline dehydrogenase of Ectopseudomonas mendocina (strain ymp) (Pseudomonas mendocina).